Reading from the N-terminus, the 346-residue chain is Proto-oncogene serine/threonine-protein kinase mos (346 aa).

The region spanning 60–341 (VCLLQRLGAG…RPLLVDLTSL (282 aa)) is the Protein kinase domain. ATP-binding positions include 66-74 (LGAGGFGSV) and Lys87. Asp201 acts as the Proton acceptor in catalysis.

This sequence belongs to the protein kinase superfamily. Ser/Thr protein kinase family.

The enzyme catalyses L-seryl-[protein] + ATP = O-phospho-L-seryl-[protein] + ADP + H(+). The catalysed reaction is L-threonyl-[protein] + ATP = O-phospho-L-threonyl-[protein] + ADP + H(+). In Chlorocebus aethiops (Green monkey), this protein is Proto-oncogene serine/threonine-protein kinase mos.